A 160-amino-acid chain; its full sequence is Sodium/proline symporter (160 aa).

2 consecutive transmembrane segments (helical) span residues 6–26 (PMLVTFIVYIFGMVLIGFIAW) and 68–88 (IFISGISESWIAIGLTLGAWI).

Belongs to the sodium:solute symporter (SSF) (TC 2.A.21) family.

The protein resides in the cell inner membrane. The enzyme catalyses L-proline(in) + Na(+)(in) = L-proline(out) + Na(+)(out). Functionally, catalyzes the sodium-dependent uptake of extracellular L-proline. The polypeptide is Sodium/proline symporter (Klebsiella oxytoca).